A 609-amino-acid chain; its full sequence is UvrABC system protein C (609 aa).

Positions 16-94 (SSAGVYRMYD…IKQYMPKYNV (79 aa)) constitute a GIY-YIG domain. The region spanning 203-238 (KQVISELVAKMEEAAEQQAYEQAARFRDQIMALRRV) is the UVR domain.

This sequence belongs to the UvrC family. In terms of assembly, interacts with UvrB in an incision complex.

The protein resides in the cytoplasm. Its function is as follows. The UvrABC repair system catalyzes the recognition and processing of DNA lesions. UvrC both incises the 5' and 3' sides of the lesion. The N-terminal half is responsible for the 3' incision and the C-terminal half is responsible for the 5' incision. The chain is UvrABC system protein C from Shewanella oneidensis (strain ATCC 700550 / JCM 31522 / CIP 106686 / LMG 19005 / NCIMB 14063 / MR-1).